The chain runs to 1315 residues: Probable nucleoporin C890.06 (1315 aa).

This sequence belongs to the non-repetitive/WGA-negative nucleoporin family.

The protein resides in the cytoplasm. It is found in the nucleus. The sequence is that of Probable nucleoporin C890.06 from Schizosaccharomyces pombe (strain 972 / ATCC 24843) (Fission yeast).